A 69-amino-acid polypeptide reads, in one-letter code: Consomatin Be1 (69 aa).

An N-terminal signal peptide occupies residues 1-22 (MEMAYWVMVMMMVWITAPLSEG). Residues 23–57 (GKLNDVIRALAPDDVTPQFILRSLISRRRSDSDVR) constitute a propeptide that is removed on maturation. Glu-58 is subject to 4-carboxyglutamate. Cys-62 and Cys-67 are disulfide-bonded. Trp-64 carries the post-translational modification D-tryptophan. Pro-68 and Pro-69 each carry 4-hydroxyproline.

The protein belongs to the conotoxin C superfamily. Consomatin family. In terms of tissue distribution, expressed by the venom duct.

It localises to the secreted. In terms of biological role, moderately activates human somatostatin receptors (SSTR) with a preferential activation of SSTR1 and SSTR4. In vivo, does not cause behavioral changes in mice within a few minutes of intracranial injection, but causes a progressive loss of movement thereafter. Four to five hours after injection, mice recover, even with the highest dose tested. Shows antinociception and antihyperalgesia activities in two mouse models of acute pain, most probably by acting outside the central nervous system. This is Consomatin Be1 from Conus betulinus (Beech cone).